We begin with the raw amino-acid sequence, 231 residues long: Eukaryotic translation initiation factor 4E-1 (231 aa).

The segment at 1-55 is disordered; that stretch reads MVVEDTQKSSITDDQITANPNNENEDLEEGEILDDDDSSATSRPPSSSGALARNP. Over residues 8 to 18 the composition is skewed to polar residues; that stretch reads KSSITDDQITA. Positions 23 to 38 are enriched in acidic residues; the sequence is ENEDLEEGEILDDDDS. Residues 39 to 48 show a composition bias toward low complexity; it reads SATSRPPSSS. EIF4G-binding regions lie at residues 56-59 and 66-102; these read HPLE and FDNP…NNIH. MRNA is bound by residues 74–79, Lys106, and 124–125; these read KQAAWG and WE. Cysteines 129 and 167 form a disulfide. The tract at residues 150–159 is EIF4G-binding; the sequence is YTLLGMIGEQ. MRNA is bound by residues 174-179 and 219-223; these read RNRQEK and KKHDR.

It belongs to the eukaryotic initiation factor 4E family. As to quaternary structure, EIF4F is a multi-subunit complex, the composition of which varies with external and internal environmental conditions. It is composed of at least EIF4A, EIF4E and EIF4G. EIF4E is also known to interact with other partners. In higher plants two isoforms of EIF4F have been identified, named isoform EIF4F and isoform EIF(iso)4F. Isoform EIF4F has subunits p220 and p26, whereas isoform EIF(iso)4F has subunits p82 and p28. In terms of assembly, (Microbial infection) Interacts with potyvirus peanut stripe virus (PStV) helper component proteinase (HC-Pro) in the cytoplasm and with PStV viral genome-linked protein (VPg) in the nucleus; these interactions are possible in susceptible hosts but impaired in resistant plants. Post-translationally, according to the redox status, the Cys-129-Cys-167 disulfide bridge may have a role in regulating protein function by affecting its ability to bind capped mRNA. In terms of tissue distribution, expressed ubiquitously with highest levels in young leaves and roots, and lowest levels in flowers.

The protein resides in the nucleus. It is found in the cytoplasm. In terms of biological role, component of the protein complex eIF4F, which is involved in the recognition of the mRNA cap, ATP-dependent unwinding of 5'-terminal secondary structure and recruitment of mRNA to the ribosome. Recognizes and binds the 7-methylguanosine-containing mRNA cap during an early step in the initiation of protein synthesis and facilitates ribosome binding by inducing the unwinding of the mRNAs secondary structures. Key component of recessive resistance to potyviruses such as peanut stripe virus (PStV). Its function is as follows. (Microbial infection) Susceptibility host factor required for viral infection by recruiting viral RNAs to the host ribosomal complex via an interaction with viral genome-linked protein (VPg). The chain is Eukaryotic translation initiation factor 4E-1 from Arachis hypogaea (Peanut).